We begin with the raw amino-acid sequence, 347 residues long: MPHATQLYQHVPEKRWPIVYSPRYNITFMGLEKLHPFDAGKWGKVINFLKEEKLLSDGMLVEAREASEEDLLVVHTRRYLNELKWSFVVATITEIPPVIFLPNFLVQRKVLRPLRTQTGGTIMAGKLAVERGWAINVGGGFHHCSSDRGGGFCAYADITLAIKFLFERVEGISRATIIDLDAHQGNGHERDFMGDKRVYIMDVYNRHIYPGDRFAKEAIRRKVELEWGTEDEEYLEKVERNVRRSLQEHLPDVVVYNAGTDVLEGDRLGGLSISPAGIVKRDEVVFRVVRAHDIPILMVTSGGYQKRTARIIADSILNLHDLGLIGPEFPCVSAQNSGIPLLSCAVP.

Positions 14–318 are histone deacetylase; that stretch reads KRWPIVYSPR…ARIIADSILN (305 aa). H143 is a catalytic residue.

The protein belongs to the histone deacetylase family. As to quaternary structure, interacts with HDAC6.

Its subcellular location is the nucleus. It carries out the reaction N(6)-acetyl-L-lysyl-[histone] + H2O = L-lysyl-[histone] + acetate. Functionally, responsible for the deacetylation of lysine residues on the N-terminal part of the core histones (H2A, H2B, H3 and H4). Histone deacetylation gives a tag for epigenetic repression and plays an important role in transcriptional regulation, cell cycle progression and developmental events. Histone deacetylases act via the formation of large multiprotein complexes. The chain is Histone deacetylase 11 (Hdac11) from Mus musculus (Mouse).